We begin with the raw amino-acid sequence, 350 residues long: Biotin synthase (350 aa).

In terms of domain architecture, Radical SAM core spans 54 to 278 (REIQLSTLLS…TMPQSYVRLS (225 aa)). [4Fe-4S] cluster-binding residues include Cys-69, Cys-73, and Cys-76. Cys-113, Cys-144, Cys-204, and Arg-276 together coordinate [2Fe-2S] cluster.

Belongs to the radical SAM superfamily. Biotin synthase family. Homodimer. [4Fe-4S] cluster serves as cofactor. [2Fe-2S] cluster is required as a cofactor.

It catalyses the reaction (4R,5S)-dethiobiotin + (sulfur carrier)-SH + 2 reduced [2Fe-2S]-[ferredoxin] + 2 S-adenosyl-L-methionine = (sulfur carrier)-H + biotin + 2 5'-deoxyadenosine + 2 L-methionine + 2 oxidized [2Fe-2S]-[ferredoxin]. It functions in the pathway cofactor biosynthesis; biotin biosynthesis; biotin from 7,8-diaminononanoate: step 2/2. Its function is as follows. Catalyzes the conversion of dethiobiotin (DTB) to biotin by the insertion of a sulfur atom into dethiobiotin via a radical-based mechanism. In Neisseria meningitidis serogroup B (strain ATCC BAA-335 / MC58), this protein is Biotin synthase.